The following is a 308-amino-acid chain: Pantothenate kinase (308 aa).

ATP is bound at residue 90–97 (GSVAVGKS).

This sequence belongs to the prokaryotic pantothenate kinase family.

It is found in the cytoplasm. It catalyses the reaction (R)-pantothenate + ATP = (R)-4'-phosphopantothenate + ADP + H(+). The protein operates within cofactor biosynthesis; coenzyme A biosynthesis; CoA from (R)-pantothenate: step 1/5. This chain is Pantothenate kinase, found in Sorangium cellulosum (strain So ce56) (Polyangium cellulosum (strain So ce56)).